A 106-amino-acid chain; its full sequence is Protein U4 (106 aa).

A helical membrane pass occupies residues 5–25; that stretch reads FFISIILFVVLLNPSLIINMV.

The protein belongs to the nanovirus U4 protein family.

The protein resides in the membrane. This chain is Protein U4 (DNA-U4), found in Cicer arietinum (Chickpea).